A 206-amino-acid chain; its full sequence is Large ribosomal subunit protein eL13y (206 aa).

Residues 182-206 (LERTNKRHAGARAKRAADAEKEEKK) are disordered. Residues 186–195 (NKRHAGARAK) are compositionally biased toward basic residues. A compositionally biased stretch (basic and acidic residues) spans 196–206 (RAADAEKEEKK).

The protein belongs to the eukaryotic ribosomal protein eL13 family.

The chain is Large ribosomal subunit protein eL13y from Brassica napus (Rape).